We begin with the raw amino-acid sequence, 406 residues long: S-adenosylmethionine synthase (406 aa).

Residue H5 participates in ATP binding. Position 7 (D7) interacts with Mg(2+). E33 is a K(+) binding site. L-methionine contacts are provided by E46 and Q89. Residues 89–99 are flexible loop; that stretch reads QSPDIAQGVDT. Residues 164 to 166, 240 to 241, D249, 255 to 256, A272, and K276 each bind ATP; these read DGK, KF, and RK. D249 is an L-methionine binding site. K280 is an L-methionine binding site.

It belongs to the AdoMet synthase family. In terms of assembly, homotetramer; dimer of dimers. Requires Mg(2+) as cofactor. K(+) serves as cofactor.

The protein localises to the cytoplasm. The catalysed reaction is L-methionine + ATP + H2O = S-adenosyl-L-methionine + phosphate + diphosphate. The protein operates within amino-acid biosynthesis; S-adenosyl-L-methionine biosynthesis; S-adenosyl-L-methionine from L-methionine: step 1/1. Catalyzes the formation of S-adenosylmethionine (AdoMet) from methionine and ATP. The overall synthetic reaction is composed of two sequential steps, AdoMet formation and the subsequent tripolyphosphate hydrolysis which occurs prior to release of AdoMet from the enzyme. This chain is S-adenosylmethionine synthase, found in Synechococcus sp. (strain ATCC 27144 / PCC 6301 / SAUG 1402/1) (Anacystis nidulans).